Here is a 374-residue protein sequence, read N- to C-terminus: Probable quinol oxidase subunit 2 (374 aa).

A signal peptide spans 1–19 (MSKFKSLLLLFGTLILLSG). Cysteine 20 carries the N-palmitoyl cysteine lipid modification. A lipid anchor (S-diacylglycerol cysteine) is attached at cysteine 20. 2 consecutive transmembrane segments (helical) span residues 43 to 63 (SIIF…IFIF) and 82 to 102 (IETI…IPTV). The tract at residues 317–374 (ERHGMKPMILGNNEKYDNEFKKEEDHNSKEMEKISKGAKDENASKLHKKEHDDHGGGH) is disordered. The span at 330 to 374 (EKYDNEFKKEEDHNSKEMEKISKGAKDENASKLHKKEHDDHGGGH) shows a compositional bias: basic and acidic residues.

This sequence belongs to the cytochrome c oxidase subunit 2 family.

Its subcellular location is the cell membrane. It carries out the reaction 2 a quinol + O2 = 2 a quinone + 2 H2O. Catalyzes quinol oxidation with the concomitant reduction of oxygen to water. Subunit II transfers the electrons from a quinol to the binuclear center of the catalytic subunit I. The sequence is that of Probable quinol oxidase subunit 2 (qoxA) from Staphylococcus epidermidis (strain ATCC 12228 / FDA PCI 1200).